Reading from the N-terminus, the 223-residue chain is Flagellar L-ring protein 2 (223 aa).

The N-terminal stretch at Met-1 to Gly-17 is a signal peptide. A lipid anchor (N-palmitoyl cysteine) is attached at Cys-18. Cys-18 is lipidated: S-diacylglycerol cysteine.

Belongs to the FlgH family. The basal body constitutes a major portion of the flagellar organelle and consists of four rings (L,P,S, and M) mounted on a central rod.

Its subcellular location is the cell outer membrane. The protein localises to the bacterial flagellum basal body. Assembles around the rod to form the L-ring and probably protects the motor/basal body from shearing forces during rotation. This is Flagellar L-ring protein 2 from Vibrio parahaemolyticus serotype O3:K6 (strain RIMD 2210633).